Consider the following 433-residue polypeptide: Tol-Pal system protein TolB (433 aa).

A signal peptide spans 1–21 (MINLFRGLLVVLCFASAMVAA).

The protein belongs to the TolB family. As to quaternary structure, the Tol-Pal system is composed of five core proteins: the inner membrane proteins TolA, TolQ and TolR, the periplasmic protein TolB and the outer membrane protein Pal. They form a network linking the inner and outer membranes and the peptidoglycan layer.

Its subcellular location is the periplasm. Its function is as follows. Part of the Tol-Pal system, which plays a role in outer membrane invagination during cell division and is important for maintaining outer membrane integrity. This Pseudomonas syringae pv. tomato (strain ATCC BAA-871 / DC3000) protein is Tol-Pal system protein TolB.